Here is a 263-residue protein sequence, read N- to C-terminus: 3-methyl-2-oxobutanoate hydroxymethyltransferase (263 aa).

Residues Asp-44 and Asp-83 each coordinate Mg(2+). 3-methyl-2-oxobutanoate is bound by residues 44-45, Asp-83, and Lys-112; that span reads DS. Position 114 (Glu-114) interacts with Mg(2+). The active-site Proton acceptor is Glu-181.

Belongs to the PanB family. In terms of assembly, homodecamer; pentamer of dimers. It depends on Mg(2+) as a cofactor.

Its subcellular location is the cytoplasm. It carries out the reaction 3-methyl-2-oxobutanoate + (6R)-5,10-methylene-5,6,7,8-tetrahydrofolate + H2O = 2-dehydropantoate + (6S)-5,6,7,8-tetrahydrofolate. The protein operates within cofactor biosynthesis; (R)-pantothenate biosynthesis; (R)-pantoate from 3-methyl-2-oxobutanoate: step 1/2. Catalyzes the reversible reaction in which hydroxymethyl group from 5,10-methylenetetrahydrofolate is transferred onto alpha-ketoisovalerate to form ketopantoate. This is 3-methyl-2-oxobutanoate hydroxymethyltransferase from Sulfurimonas denitrificans (strain ATCC 33889 / DSM 1251) (Thiomicrospira denitrificans (strain ATCC 33889 / DSM 1251)).